A 605-amino-acid polypeptide reads, in one-letter code: Elongation factor 4 (605 aa).

In terms of domain architecture, tr-type G spans 9–192 (SRIRNFCIIA…AIIARVPAPA (184 aa)). GTP is bound by residues 21–26 (DHGKST) and 139–142 (NKID).

Belongs to the TRAFAC class translation factor GTPase superfamily. Classic translation factor GTPase family. LepA subfamily.

It is found in the cell inner membrane. It catalyses the reaction GTP + H2O = GDP + phosphate + H(+). Its function is as follows. Required for accurate and efficient protein synthesis under certain stress conditions. May act as a fidelity factor of the translation reaction, by catalyzing a one-codon backward translocation of tRNAs on improperly translocated ribosomes. Back-translocation proceeds from a post-translocation (POST) complex to a pre-translocation (PRE) complex, thus giving elongation factor G a second chance to translocate the tRNAs correctly. Binds to ribosomes in a GTP-dependent manner. The sequence is that of Elongation factor 4 from Chlorobium luteolum (strain DSM 273 / BCRC 81028 / 2530) (Pelodictyon luteolum).